The primary structure comprises 405 residues: L-rhamnonate dehydratase (405 aa).

Residues His-33 and Arg-59 each coordinate substrate. Mg(2+) contacts are provided by Asp-226, Glu-252, and Glu-280. The active-site Proton acceptor is His-329. Residue Glu-349 coordinates substrate.

This sequence belongs to the mandelate racemase/muconate lactonizing enzyme family. RhamD subfamily. Homooctamer; tetramer of dimers. The cofactor is Mg(2+).

It catalyses the reaction L-rhamnonate = 2-dehydro-3-deoxy-L-rhamnonate + H2O. In terms of biological role, catalyzes the dehydration of L-rhamnonate to 2-keto-3-deoxy-L-rhamnonate (KDR). The chain is L-rhamnonate dehydratase from Escherichia coli O45:K1 (strain S88 / ExPEC).